The chain runs to 631 residues: Chaperone protein HtpG (631 aa).

Residues 1-339 are a; substrate-binding; sequence MSTNQETRGF…SNDLPLNVSR (339 aa). Positions 340 to 555 are b; it reads EILQDNKVTS…DDQMTTQMAK (216 aa). Residues 556 to 631 form a c region; that stretch reads LFAAAGQAMP…NTLLSKLTSH (76 aa).

Belongs to the heat shock protein 90 family. In terms of assembly, homodimer.

The protein resides in the cytoplasm. Functionally, molecular chaperone. Has ATPase activity. The protein is Chaperone protein HtpG of Pasteurella multocida (strain Pm70).